Here is a 291-residue protein sequence, read N- to C-terminus: 4-hydroxy-tetrahydrodipicolinate synthase (291 aa).

Thr-45 provides a ligand contact to pyruvate. Tyr-133 (proton donor/acceptor) is an active-site residue. Lys-161 serves as the catalytic Schiff-base intermediate with substrate. Residue Ile-203 participates in pyruvate binding.

The protein belongs to the DapA family. In terms of assembly, homotetramer; dimer of dimers.

Its subcellular location is the cytoplasm. It carries out the reaction L-aspartate 4-semialdehyde + pyruvate = (2S,4S)-4-hydroxy-2,3,4,5-tetrahydrodipicolinate + H2O + H(+). The protein operates within amino-acid biosynthesis; L-lysine biosynthesis via DAP pathway; (S)-tetrahydrodipicolinate from L-aspartate: step 3/4. Its function is as follows. Catalyzes the condensation of (S)-aspartate-beta-semialdehyde [(S)-ASA] and pyruvate to 4-hydroxy-tetrahydrodipicolinate (HTPA). The chain is 4-hydroxy-tetrahydrodipicolinate synthase from Teredinibacter turnerae (strain ATCC 39867 / T7901).